Consider the following 202-residue polypeptide: MATNITWHPNLTYDERKELRKQDGCTVWLTGLSASGKSTIACALEQLLLQKNLSAYRLDGDNIRFGLNKDLGFSEQDRNENIRRISEVSKLFADSCAVSITSFISPYRVDRDRARDLHKEAGLKFIEIFVDVPLEVAEQRDPKGLYKKAREGVIKEFTGISAPYEAPKAPELHLRTDQKTVEECAAIIYEYLVNEKIIRKHL.

31–38 contributes to the ATP binding site; sequence GLSASGKS. Ser-105 acts as the Phosphoserine intermediate in catalysis.

The protein belongs to the APS kinase family.

The enzyme catalyses adenosine 5'-phosphosulfate + ATP = 3'-phosphoadenylyl sulfate + ADP + H(+). It participates in sulfur metabolism; hydrogen sulfide biosynthesis; sulfite from sulfate: step 2/3. In terms of biological role, catalyzes the synthesis of activated sulfate. The protein is Adenylyl-sulfate kinase (MET14) of Saccharomyces bayanus (Yeast).